Consider the following 200-residue polypeptide: NAD(P)H dehydrogenase (quinone) (200 aa).

The Flavodoxin-like domain occupies 4–191; the sequence is VLVLYYSMYG…DIARFQGKHV (188 aa). FMN contacts are provided by residues 10–15 and 79–81; these read SMYGHI and TRF. Residue Tyr-12 coordinates NAD(+). Trp-99 provides a ligand contact to substrate. Residues 114 to 120 and His-135 contribute to the FMN site; that span reads STGTQHG.

Belongs to the WrbA family. The cofactor is FMN.

It carries out the reaction a quinone + NADH + H(+) = a quinol + NAD(+). The enzyme catalyses a quinone + NADPH + H(+) = a quinol + NADP(+). This Paraburkholderia phytofirmans (strain DSM 17436 / LMG 22146 / PsJN) (Burkholderia phytofirmans) protein is NAD(P)H dehydrogenase (quinone).